The following is a 499-amino-acid chain: Membrane-associated tyrosine- and threonine-specific cdc2-inhibitory kinase (499 aa).

An N-acetylmethionine modification is found at Met-1. Positions 1–29 (MLERPPALAMPMPTEGTPPPLSGTPIPVP) are disordered. Residues 16 to 28 (GTPPPLSGTPIPV) show a composition bias toward pro residues. Thr-17 carries the phosphothreonine modification. Phosphoserine is present on Ser-40. The segment at 42–72 (KRPRGLSRSLPPPPPAKGSIPISRLFPPRTP) is disordered. Phosphoserine is present on residues Ser-94 and Ser-120. Residues 110–359 (FQRLSRLGHG…AEALLALPVL (250 aa)) enclose the Protein kinase domain. Residues 116–124 (LGHGSYGEV) and Lys-139 contribute to the ATP site. Residues Ser-143 and Ser-160 each carry the phosphoserine modification. Asp-233 serves as the catalytic Proton acceptor. The Mg(2+) site is built by Asn-238, Asp-251, and Gly-253. A Membrane-association motif motif is present at residues 382–398 (LWQALLALLCWLWHGLA). Positions 398-499 (AHPASWLQPL…SLFEDTLDPT (102 aa)) are interaction with PIN1. Ser-426 is modified (phosphoserine; by PLK1). An interaction with CDC2-CCNB1 region spans residues 437–499 (GPSLSPEAVL…SLFEDTLDPT (63 aa)). The tract at residues 451-485 (GSTSTPRSRCTPRDALDLSDINSEPPRGSFPSFEP) is disordered. Ser-469, Ser-473, and Ser-482 each carry phosphoserine. The residue at position 495 (Thr-495) is a Phosphothreonine; by PLK1.

The protein belongs to the protein kinase superfamily. Ser/Thr protein kinase family. WEE1 subfamily. In terms of assembly, interacts with CDC2-CCNB1 complex. Can also interact with PIN1 when phosphorylated by CDC2-CCNB1. In terms of processing, autophosphorylated. Phosphorylated by CDC2-CCNB1 complexes on undefined serine and threonine residues. The phosphorylation by CDC2-CCNB1 complexes may inhibit the catalytic activity.

It is found in the endoplasmic reticulum membrane. The protein resides in the golgi apparatus membrane. The enzyme catalyses L-seryl-[protein] + ATP = O-phospho-L-seryl-[protein] + ADP + H(+). The catalysed reaction is L-threonyl-[protein] + ATP = O-phospho-L-threonyl-[protein] + ADP + H(+). With respect to regulation, negatively regulated by hyperphosphorylation during mitosis. The hyperphosphorylated form does not associate with CCNB1-CDC2 complexes. The PLK1 protein kinase may be required for mitotic phosphorylation. In terms of biological role, acts as a negative regulator of entry into mitosis (G2 to M transition) by phosphorylation of the CDK1 kinase specifically when CDK1 is complexed to cyclins. Mediates phosphorylation of CDK1 predominantly on 'Thr-14'. Also involved in Golgi fragmentation. May be involved in phosphorylation of CDK1 on 'Tyr-15' to a lesser degree, however tyrosine kinase activity is unclear and may be indirect. The chain is Membrane-associated tyrosine- and threonine-specific cdc2-inhibitory kinase (PKMYT1) from Homo sapiens (Human).